The primary structure comprises 204 residues: Thymidylate kinase (204 aa).

It belongs to the thymidylate kinase family. Homodimer; the dimer arrangement is orthogonal and not antiparallel as in human enzyme.

It carries out the reaction dTMP + ATP = dTDP + ADP. It participates in pyrimidine metabolism; dTTP biosynthesis. In terms of biological role, poxvirus TMP kinase is able to phosphorylate dTMP, dUMP and also dGMP from any purine and pyrimidine nucleoside triphosphate. The large substrate specificity is explained by the presence of a canal connecting the edge of the dimer interface to the TMP base binding pocket, canal not found in the human homolog. This is Thymidylate kinase (OPG178) from Cynomys gunnisoni (Gunnison's prairie dog).